Reading from the N-terminus, the 506-residue chain is Maturase K (506 aa).

This sequence belongs to the intron maturase 2 family. MatK subfamily.

It localises to the plastid. It is found in the chloroplast. Usually encoded in the trnK tRNA gene intron. Probably assists in splicing its own and other chloroplast group II introns. The chain is Maturase K from Ocimum basilicum (Sweet basil).